The primary structure comprises 872 residues: Alanine--tRNA ligase (872 aa).

Residues His561, His565, Cys662, and His666 each coordinate Zn(2+).

It belongs to the class-II aminoacyl-tRNA synthetase family. It depends on Zn(2+) as a cofactor.

Its subcellular location is the cytoplasm. The catalysed reaction is tRNA(Ala) + L-alanine + ATP = L-alanyl-tRNA(Ala) + AMP + diphosphate. Functionally, catalyzes the attachment of alanine to tRNA(Ala) in a two-step reaction: alanine is first activated by ATP to form Ala-AMP and then transferred to the acceptor end of tRNA(Ala). Also edits incorrectly charged Ser-tRNA(Ala) and Gly-tRNA(Ala) via its editing domain. This is Alanine--tRNA ligase from Thiobacillus denitrificans (strain ATCC 25259 / T1).